The sequence spans 183 residues: Adenine phosphoribosyltransferase (183 aa).

It belongs to the purine/pyrimidine phosphoribosyltransferase family. Homodimer.

It localises to the cytoplasm. It carries out the reaction AMP + diphosphate = 5-phospho-alpha-D-ribose 1-diphosphate + adenine. It participates in purine metabolism; AMP biosynthesis via salvage pathway; AMP from adenine: step 1/1. In terms of biological role, catalyzes a salvage reaction resulting in the formation of AMP, that is energically less costly than de novo synthesis. The sequence is that of Adenine phosphoribosyltransferase from Salmonella gallinarum (strain 287/91 / NCTC 13346).